Here is a 355-residue protein sequence, read N- to C-terminus: Phosphoserine aminotransferase (355 aa).

Arg-41 contacts L-glutamate. Residues 75 to 76 (AS), Trp-99, Thr-147, Asp-166, and Gln-189 contribute to the pyridoxal 5'-phosphate site. Lys-190 carries the N6-(pyridoxal phosphate)lysine modification. 231–232 (NT) is a binding site for pyridoxal 5'-phosphate.

This sequence belongs to the class-V pyridoxal-phosphate-dependent aminotransferase family. SerC subfamily. As to quaternary structure, homodimer. It depends on pyridoxal 5'-phosphate as a cofactor.

It is found in the cytoplasm. It catalyses the reaction O-phospho-L-serine + 2-oxoglutarate = 3-phosphooxypyruvate + L-glutamate. It carries out the reaction 4-(phosphooxy)-L-threonine + 2-oxoglutarate = (R)-3-hydroxy-2-oxo-4-phosphooxybutanoate + L-glutamate. Its pathway is amino-acid biosynthesis; L-serine biosynthesis; L-serine from 3-phospho-D-glycerate: step 2/3. It participates in cofactor biosynthesis; pyridoxine 5'-phosphate biosynthesis; pyridoxine 5'-phosphate from D-erythrose 4-phosphate: step 3/5. In terms of biological role, catalyzes the reversible conversion of 3-phosphohydroxypyruvate to phosphoserine and of 3-hydroxy-2-oxo-4-phosphonooxybutanoate to phosphohydroxythreonine. The protein is Phosphoserine aminotransferase of Bacteroides thetaiotaomicron (strain ATCC 29148 / DSM 2079 / JCM 5827 / CCUG 10774 / NCTC 10582 / VPI-5482 / E50).